Here is a 179-residue protein sequence, read N- to C-terminus: ATP synthase subunit delta (179 aa).

It belongs to the ATPase delta chain family. F-type ATPases have 2 components, F(1) - the catalytic core - and F(0) - the membrane proton channel. F(1) has five subunits: alpha(3), beta(3), gamma(1), delta(1), epsilon(1). F(0) has three main subunits: a(1), b(2) and c(10-14). The alpha and beta chains form an alternating ring which encloses part of the gamma chain. F(1) is attached to F(0) by a central stalk formed by the gamma and epsilon chains, while a peripheral stalk is formed by the delta and b chains.

It localises to the cell inner membrane. Functionally, f(1)F(0) ATP synthase produces ATP from ADP in the presence of a proton or sodium gradient. F-type ATPases consist of two structural domains, F(1) containing the extramembraneous catalytic core and F(0) containing the membrane proton channel, linked together by a central stalk and a peripheral stalk. During catalysis, ATP synthesis in the catalytic domain of F(1) is coupled via a rotary mechanism of the central stalk subunits to proton translocation. This protein is part of the stalk that links CF(0) to CF(1). It either transmits conformational changes from CF(0) to CF(1) or is implicated in proton conduction. The sequence is that of ATP synthase subunit delta from Delftia acidovorans (strain DSM 14801 / SPH-1).